We begin with the raw amino-acid sequence, 329 residues long: 4-hydroxythreonine-4-phosphate dehydrogenase (329 aa).

Substrate contacts are provided by His136 and Thr137. Residues His166, His211, and His266 each contribute to the a divalent metal cation site. The substrate site is built by Lys274, Asn283, and Arg292.

It belongs to the PdxA family. As to quaternary structure, homodimer. Zn(2+) serves as cofactor. The cofactor is Mg(2+). It depends on Co(2+) as a cofactor.

The protein localises to the cytoplasm. It catalyses the reaction 4-(phosphooxy)-L-threonine + NAD(+) = 3-amino-2-oxopropyl phosphate + CO2 + NADH. It functions in the pathway cofactor biosynthesis; pyridoxine 5'-phosphate biosynthesis; pyridoxine 5'-phosphate from D-erythrose 4-phosphate: step 4/5. In terms of biological role, catalyzes the NAD(P)-dependent oxidation of 4-(phosphooxy)-L-threonine (HTP) into 2-amino-3-oxo-4-(phosphooxy)butyric acid which spontaneously decarboxylates to form 3-amino-2-oxopropyl phosphate (AHAP). The chain is 4-hydroxythreonine-4-phosphate dehydrogenase from Pseudomonas syringae pv. tomato (strain ATCC BAA-871 / DC3000).